A 132-amino-acid polypeptide reads, in one-letter code: Small ribosomal subunit protein uS8 (132 aa).

It belongs to the universal ribosomal protein uS8 family. As to quaternary structure, part of the 30S ribosomal subunit. Contacts proteins S5 and S12.

Functionally, one of the primary rRNA binding proteins, it binds directly to 16S rRNA central domain where it helps coordinate assembly of the platform of the 30S subunit. This Clostridium acetobutylicum (strain ATCC 824 / DSM 792 / JCM 1419 / IAM 19013 / LMG 5710 / NBRC 13948 / NRRL B-527 / VKM B-1787 / 2291 / W) protein is Small ribosomal subunit protein uS8.